We begin with the raw amino-acid sequence, 31 residues long: Cyclotide mden-J (31 aa).

Residues 1-31 (GSIPCGESCVYIPCISSIVGCACKSKVCYKN) constitute a cross-link (cyclopeptide (Gly-Asn)). 3 cysteine pairs are disulfide-bonded: cysteine 5–cysteine 21, cysteine 9–cysteine 23, and cysteine 14–cysteine 28.

This sequence belongs to the cyclotide family. Bracelet subfamily. In terms of processing, this is a cyclic peptide.

In terms of biological role, probably participates in a plant defense mechanism. The polypeptide is Cyclotide mden-J (Melicytus dentatus (Tree violet)).